The following is a 406-amino-acid chain: Probable sodium/metabolite cotransporter BASS1, chloroplastic (406 aa).

The N-terminal 64 residues, 1-64 (MPLLRRPPAA…RHLCGIPSSR (64 aa)), are a transit peptide targeting the chloroplast. A run of 9 helical transmembrane segments spans residues 98-118 (VGEVLSLGFPVWVASACAVAL), 123-143 (AFLWVSPMAQIVGISFTMLGM), 152-172 (LKTALLMPKELASGFLLQYSV), 187-209 (PSYYAAGLILVSCCPGGTASNIV), 217-237 (VALSVLMTAASTFAAAFLTPL), 252-272 (MGLFVSTSQVVLAPVLLGALL), 278-298 (GLVQLVSPLMPFIAVATVAVL), 315-335 (LQVVMSVCWLHASGFFFGYVL), and 376-396 (VPCAVSSVCHSVYGSLLAGIW).

This sequence belongs to the bile acid:sodium symporter (BASS) (TC 2.A.28) family.

It is found in the membrane. The protein localises to the plastid. Its subcellular location is the chloroplast envelope. In terms of biological role, may function as sodium-coupled metabolite transporter across the chloroplast envelope. The sequence is that of Probable sodium/metabolite cotransporter BASS1, chloroplastic (BASS1) from Oryza sativa subsp. japonica (Rice).